A 283-amino-acid polypeptide reads, in one-letter code: Probable 3-deoxy-manno-octulosonic acid transferase (283 aa).

It is found in the cytoplasm. The catalysed reaction is an alpha-Kdo-(2-&gt;4)-alpha-Kdo-(2-&gt;6)-lipid IVA + CMP-3-deoxy-beta-D-manno-octulosonate = an alpha-Kdo-(2-&gt;4)-alpha-Kdo-(2-&gt;4)-alpha-Kdo-(2-&gt;6)-lipid IVA + CMP + H(+). The enzyme catalyses alpha-Kdo-(2-&gt;4)-alpha-Kdo-(2-&gt;6)-lipid IVA (E. coli) + CMP-3-deoxy-beta-D-manno-octulosonate = alpha-Kdo-(2-&gt;4)-alpha-Kdo-(2-&gt;4)-alpha-Kdo-(2-&gt;6)-lipid IVA + CMP + H(+). The protein operates within bacterial outer membrane biogenesis; LPS core biosynthesis. It participates in bacterial outer membrane biogenesis; LOS core biosynthesis. In terms of biological role, involved in the biosynthesis of the core oligosaccharide region of lipopolysaccharide (LPS). Required for the addition of 3-deoxy-D-manno-oct-2-ulosonic acid III (KdoIII) to the KdoII residue of the inner lipopolysaccharide core. May also play a role in a lipooligosaccharide (LOS) biosynthesis pathway. In Escherichia coli (strain K12), this protein is Probable 3-deoxy-manno-octulosonic acid transferase.